The primary structure comprises 79 residues: Sec-independent protein translocase protein TatA (79 aa).

The helical transmembrane segment at Met1 to Phe21 threads the bilayer. Residues Glu48–Ser79 form a disordered region. A compositionally biased stretch (basic and acidic residues) spans Lys66 to Ser79.

Belongs to the TatA/E family. As to quaternary structure, the Tat system comprises two distinct complexes: a TatABC complex, containing multiple copies of TatA, TatB and TatC subunits, and a separate TatA complex, containing only TatA subunits. Substrates initially bind to the TatABC complex, which probably triggers association of the separate TatA complex to form the active translocon.

It localises to the cell inner membrane. Its function is as follows. Part of the twin-arginine translocation (Tat) system that transports large folded proteins containing a characteristic twin-arginine motif in their signal peptide across membranes. TatA could form the protein-conducting channel of the Tat system. The chain is Sec-independent protein translocase protein TatA from Helicobacter pylori (strain Shi470).